A 416-amino-acid polypeptide reads, in one-letter code: Tyrosine--tRNA ligase (416 aa).

Tyr-39 is a binding site for L-tyrosine. The 'HIGH' region signature appears at 44-53; it reads CTAPSLHAGH. L-tyrosine contacts are provided by Tyr-176 and Gln-180. The 'KMSKS' region motif lies at 236–240; sequence KMGKT. Position 239 (Lys-239) interacts with ATP. In terms of domain architecture, S4 RNA-binding spans 349-414; that stretch reads ISLVDLLHDT…AGKKRHIKVV (66 aa).

The protein belongs to the class-I aminoacyl-tRNA synthetase family. TyrS type 1 subfamily. Homodimer.

It localises to the cytoplasm. The enzyme catalyses tRNA(Tyr) + L-tyrosine + ATP = L-tyrosyl-tRNA(Tyr) + AMP + diphosphate + H(+). In terms of biological role, catalyzes the attachment of tyrosine to tRNA(Tyr) in a two-step reaction: tyrosine is first activated by ATP to form Tyr-AMP and then transferred to the acceptor end of tRNA(Tyr). The chain is Tyrosine--tRNA ligase from Wolbachia pipientis wMel.